The chain runs to 210 residues: Na(+)-translocating NADH-quinone reductase subunit D (210 aa).

6 helical membrane passes run 14–34, 42–62, 72–92, 96–116, 131–151, and 178–198; these read PIIN…ALAV, LVMS…ISLI, IIVQ…VLQA, EIAK…IVMG, FMDG…VGFF, and NGLL…IWVI.

It belongs to the NqrDE/RnfAE family. Composed of six subunits; NqrA, NqrB, NqrC, NqrD, NqrE and NqrF.

It is found in the cell inner membrane. It carries out the reaction a ubiquinone + n Na(+)(in) + NADH + H(+) = a ubiquinol + n Na(+)(out) + NAD(+). Its function is as follows. NQR complex catalyzes the reduction of ubiquinone-1 to ubiquinol by two successive reactions, coupled with the transport of Na(+) ions from the cytoplasm to the periplasm. NqrA to NqrE are probably involved in the second step, the conversion of ubisemiquinone to ubiquinol. This chain is Na(+)-translocating NADH-quinone reductase subunit D, found in Shewanella denitrificans (strain OS217 / ATCC BAA-1090 / DSM 15013).